The sequence spans 422 residues: Serine protease HTRA2, mitochondrial (422 aa).

Residues 1–17 constitute a mitochondrion transit peptide; it reads MALRGSHRLQVILKRCI. Residues 18 to 74 constitute a propeptide that is removed on maturation; it reads ASPLFHSHAPNRRSSQPAIKGGEPNSNGNSGHDQQNGERKGKGWRRLVSFFVPFSLG. Residues 24 to 56 are disordered; sequence SHAPNRRSSQPAIKGGEPNSNGNSGHDQQNGER. The segment covering 41-51 has biased composition (polar residues); it reads PNSNGNSGHDQ. A helical transmembrane segment spans residues 64–82; it reads LVSFFVPFSLGAVVSAAVI. 2 short sequence motifs (IAP-binding) span residues 75-78 and 94-97; these read AVVS and SKMT. The tract at residues 139–302 is serine protease; sequence SNGSGFIIEQ…IPIDYVKVFL (164 aa). Catalysis depends on charge relay system residues histidine 157, aspartate 189, and serine 266. Residues 325–410 enclose the PDZ domain; it reads MGITMLTLTP…NLDIVILRGV (86 aa).

It belongs to the peptidase S1C family. Interacts with th/DIAP1 (via BIR 2 domain).

The protein localises to the mitochondrion intermembrane space. It localises to the mitochondrion membrane. The catalysed reaction is Cleavage of non-polar aliphatic amino-acids at the P1 position, with a preference for Val, Ile and Met. At the P2 and P3 positions, Arg is selected most strongly with a secondary preference for other hydrophilic residues.. Functionally, serine protease that shows proteolytic activity against a non-specific substrate beta-casein. Promotes or induces cell death either by direct binding to and inhibition of BIRC proteins (also called inhibitor of apoptosis proteins, IAPs), leading to an increase in caspase activity, or by a BIRC inhibition-independent, caspase-independent and serine protease activity-dependent mechanism. Can antagonize antiapoptotic activity of th/Diap1 by directly inducing the degradation of th/Diap1. The chain is Serine protease HTRA2, mitochondrial from Drosophila erecta (Fruit fly).